Reading from the N-terminus, the 143-residue chain is Sirohydrochlorin cobaltochelatase (143 aa).

Residue H9 is the Proton acceptor of the active site. H9 is a binding site for Co(2+). Residue H9 coordinates Ni(2+). Substrate is bound by residues E45 and L70–H75. H75 is a binding site for Co(2+). H75 contributes to the Ni(2+) binding site.

It belongs to the CbiX family. CbiXS subfamily. As to quaternary structure, homotetramer; dimer of dimers.

The enzyme catalyses Co-sirohydrochlorin + 2 H(+) = sirohydrochlorin + Co(2+). The catalysed reaction is Ni-sirohydrochlorin + 2 H(+) = sirohydrochlorin + Ni(2+). It participates in cofactor biosynthesis; adenosylcobalamin biosynthesis; cob(II)yrinate a,c-diamide from sirohydrochlorin (anaerobic route): step 1/10. Its function is as follows. Catalyzes the insertion of Co(2+) into sirohydrochlorin as part of the anaerobic pathway to cobalamin biosynthesis. Involved in the biosynthesis of the unique nickel-containing tetrapyrrole coenzyme F430, the prosthetic group of methyl-coenzyme M reductase (MCR), which plays a key role in methanogenesis and anaerobic methane oxidation. Catalyzes the insertion of Ni(2+) into sirohydrochlorin to yield Ni-sirohydrochlorin. This is Sirohydrochlorin cobaltochelatase from Methanocaldococcus jannaschii (strain ATCC 43067 / DSM 2661 / JAL-1 / JCM 10045 / NBRC 100440) (Methanococcus jannaschii).